The following is a 1366-amino-acid chain: Protein strawberry notch homolog 2 (1366 aa).

Disordered regions lie at residues methionine 1–leucine 24, glutamine 174–proline 217, serine 614–arginine 640, and histidine 1324–leucine 1366. A compositionally biased stretch (pro residues) spans histidine 15–leucine 24. Acidic residues predominate over residues proline 182 to glutamate 194. Residues serine 614–lysine 637 are compositionally biased toward basic residues. The span at leucine 1333–proline 1347 shows a compositional bias: gly residues.

This sequence belongs to the SBNO family. Interacts with TAL1; this interaction inhibits TAL1 occupancy of the DCSTAMP promoter, leading to the activation of the DCSTAMP promoter by the transcription factor MITF. Detected in macrophages. IL10 regulates expression in a STAT3-dependent way.

In terms of biological role, acts as a transcriptional coregulator, that can have both coactivator and corepressor functions. Inhibits the DCSTAMP-repressive activity of TAL1, hence enhancing the access of the transcription factor MITF to the DC-STAMP promoter in osteoclast. Plays a role in bone homeostasis; required as a positive regulator in TNFSF11//RANKL-mediated osteoclast fusion via a DCSTAMP-dependent pathway. May also be required in the regulation of osteoblast differentiation. Involved in the transcriptional corepression of NF-kappaB in macrophages. Plays a role as a regulator in the pro-inflammatory cascade. The polypeptide is Protein strawberry notch homolog 2 (SBNO2) (Homo sapiens (Human)).